An 89-amino-acid chain; its full sequence is Small ribosomal subunit protein uS17 (89 aa).

Belongs to the universal ribosomal protein uS17 family. In terms of assembly, part of the 30S ribosomal subunit.

Its function is as follows. One of the primary rRNA binding proteins, it binds specifically to the 5'-end of 16S ribosomal RNA. The protein is Small ribosomal subunit protein uS17 of Coxiella burnetii (strain RSA 493 / Nine Mile phase I).